An 85-amino-acid polypeptide reads, in one-letter code: Small ribosomal subunit protein uS17 (85 aa).

The protein belongs to the universal ribosomal protein uS17 family. In terms of assembly, part of the 30S ribosomal subunit.

One of the primary rRNA binding proteins, it binds specifically to the 5'-end of 16S ribosomal RNA. This chain is Small ribosomal subunit protein uS17, found in Natranaerobius thermophilus (strain ATCC BAA-1301 / DSM 18059 / JW/NM-WN-LF).